The chain runs to 179 residues: Large ribosomal subunit protein uL5 (179 aa).

This sequence belongs to the universal ribosomal protein uL5 family. As to quaternary structure, part of the 50S ribosomal subunit; part of the 5S rRNA/L5/L18/L25 subcomplex. Contacts the 5S rRNA and the P site tRNA. Forms a bridge to the 30S subunit in the 70S ribosome.

Its function is as follows. This is one of the proteins that bind and probably mediate the attachment of the 5S RNA into the large ribosomal subunit, where it forms part of the central protuberance. In the 70S ribosome it contacts protein S13 of the 30S subunit (bridge B1b), connecting the 2 subunits; this bridge is implicated in subunit movement. Contacts the P site tRNA; the 5S rRNA and some of its associated proteins might help stabilize positioning of ribosome-bound tRNAs. This is Large ribosomal subunit protein uL5 from Bacillus cereus (strain G9842).